Here is a 64-residue protein sequence, read N- to C-terminus: MLILTRRVGETIIIDDQIKVTVLAVKGNQVRLGVQAPDEIAIHREEIYHRLMNGVGDDAEMEKK.

This sequence belongs to the CsrA/RsmA family. As to quaternary structure, homodimer; the beta-strands of each monomer intercalate to form a hydrophobic core, while the alpha-helices form wings that extend away from the core.

Its subcellular location is the cytoplasm. In terms of biological role, a key translational regulator that binds mRNA to regulate translation initiation and/or mRNA stability. Mediates global changes in gene expression, shifting from rapid growth to stress survival by linking envelope stress, the stringent response and the catabolite repression systems. Usually binds in the 5'-UTR; binding at or near the Shine-Dalgarno sequence prevents ribosome-binding, repressing translation, binding elsewhere in the 5'-UTR can activate translation and/or stabilize the mRNA. Its function is antagonized by small RNA(s). This Dichelobacter nodosus (strain VCS1703A) protein is Translational regulator CsrA.